The primary structure comprises 149 residues: Transcriptional regulator MraZ (149 aa).

2 SpoVT-AbrB domains span residues 7–54 (KYVN…GISH) and 83–126 (AVQL…QPQN).

Belongs to the MraZ family. In terms of assembly, forms oligomers.

It is found in the cytoplasm. Its subcellular location is the nucleoid. This chain is Transcriptional regulator MraZ, found in Rickettsia rickettsii (strain Sheila Smith).